Consider the following 234-residue polypeptide: MIKLIVNADDFGLTEGTNYGIIDGHINGLVNSTTMMMNMPGTEHAVHLAKEYKTLGVGVHLVLTAGKPLLGDVPSLVSSDGLFHKQSVVWEGKVNPEEVEREWTAQIEKFLSYGLKPTHLDSHHHVHGLPILHDVLERLAATYNVPIRRCEEERAVRPFSDLFYSDFYADGVTEDYFVKLKERVQGEQTVEIMVHPAYIDPELVKRSSYVMDRVKELRILTESELPEGIELVKF.

2 residues coordinate Mg(2+): His-60 and His-123.

It belongs to the YdjC deacetylase family. Requires Mg(2+) as cofactor.

Its function is as follows. Probably catalyzes the deacetylation of acetylated carbohydrates an important step in the degradation of oligosaccharides. The chain is Carbohydrate deacetylase from Bacillus anthracis.